The sequence spans 618 residues: Cationic amino acid transporter 3 (618 aa).

Topologically, residues 1–36 (MLWQALRRFGQKLVRRRVLELGMGETRLARCLSTLD) are cytoplasmic. A helical membrane pass occupies residues 37–57 (LVALGVGSTLGAGVYVLAGEV). The Extracellular portion of the chain corresponds to 58 to 61 (AKDK). The chain crosses the membrane as a helical span at residues 62 to 82 (AGPSIVICFLVAALSSVLAGL). Residues 83-107 (CYAEFGARVPGSGSAYLYSYVTVGE) are Cytoplasmic-facing. Residues 108–128 (LWAFTTGWNLILSYVIGTASV) traverse the membrane as a helical segment. The Extracellular segment spans residues 129-162 (ARAWSSAFDNLIGNHISRTLKGTILLKMPHVLAE). A helical transmembrane segment spans residues 163–183 (YPDFFALALVLLLTGLLVLGA). Residues 184–191 (SKSALVTK) lie on the Cytoplasmic side of the membrane. Residues 192 to 212 (VFTGMNLLVLSFVIISGFIKG) traverse the membrane as a helical segment. Residues 213-244 (ELRNWKLTKEDYCLTMSESNGTCSLDSMGSGG) lie on the Extracellular side of the membrane. N232 carries N-linked (GlcNAc...) asparagine glycosylation. The helical transmembrane segment at 245-265 (FMPFGLEGILRGAATCFYAFV) threads the bilayer. At 266 to 285 (GFDCIATTGEEAQNPQRSIP) the chain is on the cytoplasmic side. Residues 286–306 (MGIVISMFICFLAYFGVSSAL) traverse the membrane as a helical segment. The Extracellular segment spans residues 307-335 (TLMMPYYKLHPESPLPEAFSYVGWEPARY). Residues 336-356 (LVAIGSLCALSTSLLGSMFPM) traverse the membrane as a helical segment. Over 357 to 380 (PRVMYSMAEDGLLFRVLAKVHSVT) the chain is Cytoplasmic. Residues 381–401 (HIPIVATLVSGVIAAFMAFLF) traverse the membrane as a helical segment. The Extracellular segment spans residues 402–406 (ELTDL). The chain crosses the membrane as a helical span at residues 407–427 (VDLMSIGTLLAHSLVSICVLI). The Cytoplasmic segment spans residues 428-474 (LRYQPDQEMKSVEEEMELQEETLEAEKLTVQALFCPVNSIPTLLSGR). Residues 475-495 (VVYVCSSLLAVLLTVLCLVLT) traverse the membrane as a helical segment. The Extracellular segment spans residues 496–506 (WWTTPLRSGDP). Residues 507–527 (VWVTVVVLILGLILAISGVIW) form a helical membrane-spanning segment. Topologically, residues 528–539 (RQPQNRTPLHFK) are cytoplasmic. Residues 540-560 (VPAVPLLPLVSIFVNVYLMMQ) traverse the membrane as a helical segment. The Extracellular segment spans residues 561 to 568 (MTAGTWAR). A helical membrane pass occupies residues 569-589 (FGIWMLIGFAIYFGYGIQHSM). The Cytoplasmic segment spans residues 590-618 (KEVKNHQTLPKTRAQTIDLDLTTSCVHSI). T605 carries the post-translational modification Phosphothreonine. S617 bears the Phosphoserine mark.

It belongs to the amino acid-polyamine-organocation (APC) superfamily. Cationic amino acid transporter (CAT) (TC 2.A.3.3) family. Post-translationally, N-glycosylated. Expressed in adult brain and in a wide variety of embryonic tissues.

The protein localises to the cell membrane. The catalysed reaction is L-arginine(in) = L-arginine(out). The enzyme catalyses L-lysine(in) = L-lysine(out). It catalyses the reaction L-ornithine(in) = L-ornithine(out). Uniporter that mediates the uptake of cationic L-amino acids such as L-arginine, L-lysine and L-ornithine. The transport is sodium ions- and pH-independent, moderately trans-stimulated and is mediated by passive diffusion. The sequence is that of Cationic amino acid transporter 3 from Mus musculus (Mouse).